The primary structure comprises 307 residues: N-acetylmuramic acid 6-phosphate etherase (307 aa).

In terms of domain architecture, SIS spans 62–225 (VVDAFRVGGR…TTASMIRIGK (164 aa)). The active-site Proton donor is glutamate 90. Glutamate 121 is a catalytic residue.

This sequence belongs to the GCKR-like family. MurNAc-6-P etherase subfamily. Homodimer.

It catalyses the reaction N-acetyl-D-muramate 6-phosphate + H2O = N-acetyl-D-glucosamine 6-phosphate + (R)-lactate. Its pathway is amino-sugar metabolism; 1,6-anhydro-N-acetylmuramate degradation. It participates in amino-sugar metabolism; N-acetylmuramate degradation. It functions in the pathway cell wall biogenesis; peptidoglycan recycling. Specifically catalyzes the cleavage of the D-lactyl ether substituent of MurNAc 6-phosphate, producing GlcNAc 6-phosphate and D-lactate. Together with AnmK, is also required for the utilization of anhydro-N-acetylmuramic acid (anhMurNAc) either imported from the medium or derived from its own cell wall murein, and thus plays a role in cell wall recycling. The protein is N-acetylmuramic acid 6-phosphate etherase of Brucella anthropi (strain ATCC 49188 / DSM 6882 / CCUG 24695 / JCM 21032 / LMG 3331 / NBRC 15819 / NCTC 12168 / Alc 37) (Ochrobactrum anthropi).